The primary structure comprises 541 residues: Light-independent protochlorophyllide reductase subunit B (541 aa).

Aspartate 36 contributes to the [4Fe-4S] cluster binding site. The active-site Proton donor is aspartate 290. Residue 425 to 426 (GL) participates in substrate binding.

This sequence belongs to the ChlB/BchB/BchZ family. Protochlorophyllide reductase is composed of three subunits; ChlL, ChlN and ChlB. Forms a heterotetramer of two ChlB and two ChlN subunits. [4Fe-4S] cluster serves as cofactor.

It catalyses the reaction chlorophyllide a + oxidized 2[4Fe-4S]-[ferredoxin] + 2 ADP + 2 phosphate = protochlorophyllide a + reduced 2[4Fe-4S]-[ferredoxin] + 2 ATP + 2 H2O. It participates in porphyrin-containing compound metabolism; chlorophyll biosynthesis (light-independent). In terms of biological role, component of the dark-operative protochlorophyllide reductase (DPOR) that uses Mg-ATP and reduced ferredoxin to reduce ring D of protochlorophyllide (Pchlide) to form chlorophyllide a (Chlide). This reaction is light-independent. The NB-protein (ChlN-ChlB) is the catalytic component of the complex. The protein is Light-independent protochlorophyllide reductase subunit B of Synechococcus sp. (strain CC9902).